Here is a 346-residue protein sequence, read N- to C-terminus: Inner membrane protein YnjI (346 aa).

Residues 1 to 38 lie on the Periplasmic side of the membrane; the sequence is MKKVLLQNHPGSEKYSFNGWEIFNSNFERMIKENKAML. A helical transmembrane segment spans residues 39-59; sequence LCKWGFYLTCVVAVMFVFAAI. Residues 60–68 are Cytoplasmic-facing; it reads TSNGLNERG. The helical transmembrane segment at 69–89 threads the bilayer; sequence LITAGCSFLYLLIMMGLIVRA. The Periplasmic segment spans residues 90–234; the sequence is GFKAKKEQLH…DCANHSSGKS (145 aa). The chain crosses the membrane as a helical span at residues 235–255; sequence SAKLIWAAELSWMISISSTAF. Topologically, residues 256-346 are cytoplasmic; it reads QNGTIEEELA…PWGASSVKYS (91 aa).

The protein resides in the cell inner membrane. The polypeptide is Inner membrane protein YnjI (ynjI) (Escherichia coli (strain K12)).